Consider the following 309-residue polypeptide: Porphobilinogen deaminase (309 aa).

Cys244 carries the S-(dipyrrolylmethanemethyl)cysteine modification.

The protein belongs to the HMBS family. In terms of assembly, monomer. Dipyrromethane is required as a cofactor.

It carries out the reaction 4 porphobilinogen + H2O = hydroxymethylbilane + 4 NH4(+). Its pathway is porphyrin-containing compound metabolism; protoporphyrin-IX biosynthesis; coproporphyrinogen-III from 5-aminolevulinate: step 2/4. In terms of biological role, tetrapolymerization of the monopyrrole PBG into the hydroxymethylbilane pre-uroporphyrinogen in several discrete steps. In Listeria monocytogenes serotype 4a (strain HCC23), this protein is Porphobilinogen deaminase.